Reading from the N-terminus, the 77-residue chain is NAD(P)H-quinone oxidoreductase subunit L (77 aa).

2 consecutive transmembrane segments (helical) span residues Leu12–Tyr32 and Leu47–Leu67.

Belongs to the complex I NdhL subunit family. As to quaternary structure, NDH-1 can be composed of about 15 different subunits; different subcomplexes with different compositions have been identified which probably have different functions.

Its subcellular location is the cellular thylakoid membrane. The enzyme catalyses a plastoquinone + NADH + (n+1) H(+)(in) = a plastoquinol + NAD(+) + n H(+)(out). The catalysed reaction is a plastoquinone + NADPH + (n+1) H(+)(in) = a plastoquinol + NADP(+) + n H(+)(out). In terms of biological role, NDH-1 shuttles electrons from an unknown electron donor, via FMN and iron-sulfur (Fe-S) centers, to quinones in the respiratory and/or the photosynthetic chain. The immediate electron acceptor for the enzyme in this species is believed to be plastoquinone. Couples the redox reaction to proton translocation, and thus conserves the redox energy in a proton gradient. Cyanobacterial NDH-1 also plays a role in inorganic carbon-concentration. This is NAD(P)H-quinone oxidoreductase subunit L from Prochlorococcus marinus (strain MIT 9312).